The sequence spans 574 residues: uncharacterized protein (574 aa).

Residues 297–327 are disordered; that stretch reads STASKSKKRRKDEVSGAQRNSSPLPQDAVSS. Positions 313–327 are enriched in polar residues; the sequence is AQRNSSPLPQDAVSS.

This is an uncharacterized protein from Macaca fascicularis (Crab-eating macaque).